A 232-amino-acid polypeptide reads, in one-letter code: Protein fmp52-1, mitochondrial (232 aa).

The transit peptide at 1–36 (MASVALIGCTGMVGSHILTSLLAHPSVARVDTISRR) directs the protein to the mitochondrion.

It belongs to the FMP52 family.

The protein resides in the mitochondrion outer membrane. This chain is Protein fmp52-1, mitochondrial (fmp521), found in Aspergillus terreus (strain NIH 2624 / FGSC A1156).